The chain runs to 430 residues: Asparagine--tRNA ligase (430 aa).

Belongs to the class-II aminoacyl-tRNA synthetase family.

It localises to the cytoplasm. It carries out the reaction tRNA(Asn) + L-asparagine + ATP = L-asparaginyl-tRNA(Asn) + AMP + diphosphate + H(+). The protein is Asparagine--tRNA ligase of Thermococcus gammatolerans (strain DSM 15229 / JCM 11827 / EJ3).